The chain runs to 62 residues: MNLVKILFCVFACLVFTVTAVPEPRWKFFKKIEKVGQNIRDGIIKAGPAVAVVGQAASITGK.

The first 20 residues, Met1–Ala20, serve as a signal peptide directing secretion. A propeptide spans Val21–Pro24 (removed by a dipeptidylpeptidase). Thr60 bears the Threonine amide mark.

The protein belongs to the cecropin family.

The protein localises to the secreted. Has antibacterial activity. The sequence is that of Cecropin-A from Trichoplusia ni (Cabbage looper).